A 193-amino-acid polypeptide reads, in one-letter code: Ion-translocating oxidoreductase complex subunit A (193 aa).

6 helical membrane-spanning segments follow: residues 5-25, 39-59, 62-82, 102-122, 134-154, and 171-191; these read FLLFVGTVLVNNFVLVKFLGL, IGMGFATTFVMTLASVCSWLV, FILLPLDLIYLRTLSFILVIA, LLGIFLPLITTNCAVLGVALL, AIYGFGAAAGFSLVMVLFAAI, and SIGLITAGLMSLAFMGFSGLV.

Belongs to the NqrDE/RnfAE family. As to quaternary structure, the complex is composed of six subunits: RnfA, RnfB, RnfC, RnfD, RnfE and RnfG.

The protein resides in the cell inner membrane. Part of a membrane-bound complex that couples electron transfer with translocation of ions across the membrane. The protein is Ion-translocating oxidoreductase complex subunit A of Photorhabdus laumondii subsp. laumondii (strain DSM 15139 / CIP 105565 / TT01) (Photorhabdus luminescens subsp. laumondii).